A 120-amino-acid polypeptide reads, in one-letter code: Large ribosomal subunit protein uL18 (120 aa).

Belongs to the universal ribosomal protein uL18 family. As to quaternary structure, part of the 50S ribosomal subunit; part of the 5S rRNA/L5/L18/L25 subcomplex. Contacts the 5S and 23S rRNAs.

Its function is as follows. This is one of the proteins that bind and probably mediate the attachment of the 5S RNA into the large ribosomal subunit, where it forms part of the central protuberance. The sequence is that of Large ribosomal subunit protein uL18 from Geobacillus thermodenitrificans (strain NG80-2).